A 341-amino-acid chain; its full sequence is Heat-inducible transcription repressor HrcA (341 aa).

It belongs to the HrcA family.

In terms of biological role, negative regulator of class I heat shock genes (grpE-dnaK-dnaJ and groELS operons). Prevents heat-shock induction of these operons. The sequence is that of Heat-inducible transcription repressor HrcA from Leptothrix cholodnii (strain ATCC 51168 / LMG 8142 / SP-6) (Leptothrix discophora (strain SP-6)).